We begin with the raw amino-acid sequence, 39 residues long: Potassium channel toxin alpha-KTx 2.18 (39 aa).

3 disulfides stabilise this stretch: cysteine 7/cysteine 29, cysteine 13/cysteine 34, and cysteine 17/cysteine 36. Residue isoleucine 39 is modified to Isoleucine amide.

The protein belongs to the short scorpion toxin superfamily. Potassium channel inhibitor family. Alpha-KTx 02 subfamily. In terms of tissue distribution, expressed by the venom gland.

The protein localises to the secreted. Weakly blocks Kv1.3/KCNA3 voltage-gated potassium channels. The chain is Potassium channel toxin alpha-KTx 2.18 from Centruroides limpidus (Mexican scorpion).